Consider the following 360-residue polypeptide: Glycerol-1-phosphate dehydrogenase [NAD(P)+] (360 aa).

NAD(+)-binding positions include 108-112 and 130-133; these read GRVID and TAAS. Asp135 serves as a coordination point for substrate. Ser139 contacts NAD(+). Substrate is bound at residue Asp182. The Zn(2+) site is built by Asp182 and His262. His266 serves as a coordination point for substrate. His278 is a binding site for Zn(2+).

It belongs to the glycerol-1-phosphate dehydrogenase family. It depends on Zn(2+) as a cofactor.

Its subcellular location is the cytoplasm. It carries out the reaction sn-glycerol 1-phosphate + NAD(+) = dihydroxyacetone phosphate + NADH + H(+). The catalysed reaction is sn-glycerol 1-phosphate + NADP(+) = dihydroxyacetone phosphate + NADPH + H(+). The protein operates within membrane lipid metabolism; glycerophospholipid metabolism. Its function is as follows. Catalyzes the NAD(P)H-dependent reduction of dihydroxyacetonephosphate (DHAP or glycerone phosphate) to glycerol 1-phosphate (G1P). The G1P thus generated is used as the glycerophosphate backbone of phospholipids in the cellular membranes of Archaea. This Methanocorpusculum labreanum (strain ATCC 43576 / DSM 4855 / Z) protein is Glycerol-1-phosphate dehydrogenase [NAD(P)+].